The primary structure comprises 371 residues: Glutamate 5-kinase (371 aa).

K14 serves as a coordination point for ATP. Residues S52, D139, and N151 each contribute to the substrate site. S171 to D172 provides a ligand contact to ATP. A PUA domain is found at E275 to S353.

Belongs to the glutamate 5-kinase family.

Its subcellular location is the cytoplasm. It carries out the reaction L-glutamate + ATP = L-glutamyl 5-phosphate + ADP. Its pathway is amino-acid biosynthesis; L-proline biosynthesis; L-glutamate 5-semialdehyde from L-glutamate: step 1/2. Functionally, catalyzes the transfer of a phosphate group to glutamate to form L-glutamate 5-phosphate. The polypeptide is Glutamate 5-kinase (Frankia casuarinae (strain DSM 45818 / CECT 9043 / HFP020203 / CcI3)).